The chain runs to 291 residues: MSWLSKLMPSGIRTDNTPSKKRSVPEGLWEKCSNCGSALYRPELEENLEVCPKCGHHMAIRARARLAALFDADSTTEIGARLGPTDLLKFKDQKKYSERIKIAQKNTGEYDALIAMRGLLKGRALVASSFDFAFMGGSMGSVVGERFALAAETAVEIGAPYVCFSQSGGARMQEGLFSLMQMAKTSAALGKLRETGLPYISVLTHPTTGGVSASFAMLGDINIAEPQALIGFAGPRVIEQTVREKLPEGFQRSEFLLEHGAIDQICDRREMRDRLSDLLAMLGRQPAPEVA.

The segment at 1–23 (MSWLSKLMPSGIRTDNTPSKKRS) is disordered. The region spanning 28–291 (LWEKCSNCGS…LGRQPAPEVA (264 aa)) is the CoA carboxyltransferase N-terminal domain. C32, C35, C51, and C54 together coordinate Zn(2+). A C4-type zinc finger spans residues 32–54 (CSNCGSALYRPELEENLEVCPKC).

Belongs to the AccD/PCCB family. As to quaternary structure, acetyl-CoA carboxylase is a heterohexamer composed of biotin carboxyl carrier protein (AccB), biotin carboxylase (AccC) and two subunits each of ACCase subunit alpha (AccA) and ACCase subunit beta (AccD). It depends on Zn(2+) as a cofactor.

It localises to the cytoplasm. It catalyses the reaction N(6)-carboxybiotinyl-L-lysyl-[protein] + acetyl-CoA = N(6)-biotinyl-L-lysyl-[protein] + malonyl-CoA. It participates in lipid metabolism; malonyl-CoA biosynthesis; malonyl-CoA from acetyl-CoA: step 1/1. Functionally, component of the acetyl coenzyme A carboxylase (ACC) complex. Biotin carboxylase (BC) catalyzes the carboxylation of biotin on its carrier protein (BCCP) and then the CO(2) group is transferred by the transcarboxylase to acetyl-CoA to form malonyl-CoA. In Stenotrophomonas maltophilia (strain K279a), this protein is Acetyl-coenzyme A carboxylase carboxyl transferase subunit beta.